Consider the following 792-residue polypeptide: Phenylalanine--tRNA ligase beta subunit (792 aa).

The tRNA-binding domain maps to 40 to 156; that stretch reads FPRTENLIVG…AKLNDIDPLK (117 aa). The B5 domain maps to 404–472; sequence LKDNLIDFDS…KKINVNNLEL (69 aa). Residues D450, D456, E459, and E460 each contribute to the Mg(2+) site.

This sequence belongs to the phenylalanyl-tRNA synthetase beta subunit family. Type 1 subfamily. Tetramer of two alpha and two beta subunits. The cofactor is Mg(2+).

Its subcellular location is the cytoplasm. It catalyses the reaction tRNA(Phe) + L-phenylalanine + ATP = L-phenylalanyl-tRNA(Phe) + AMP + diphosphate + H(+). This Malacoplasma penetrans (strain HF-2) (Mycoplasma penetrans) protein is Phenylalanine--tRNA ligase beta subunit.